The chain runs to 496 residues: 4-O-methyl-glucuronoyl methylesterase 1 (496 aa).

The N-terminal stretch at 1 to 19 (MKSTVASALLVLAGTAVQA) is a signal peptide. Residues 20–55 (QSGPWQQCGGIGWQGPFTCVSGHTCQVLNDWYHQCV) enclose the CBM1 domain. Positions 57–151 (GGGPSPPPTS…RLPDPFTFHN (95 aa)) are disordered. Over residues 59–125 (GPSPPPTSPP…SPPPTSPPPS (67 aa)) the composition is skewed to pro residues. Disulfide bonds link Cys-129–Cys-163, Cys-307–Cys-443, and Cys-339–Cys-415. The GXSYXG catalytic site motif motif lies at 306–311 (GCSRNG). The Nucleophile role is filled by Ser-308. Substrate-binding residues include Lys-312, Gln-354, Glu-362, and Trp-406. Residue His-442 is the Proton donor/acceptor of the active site.

This sequence belongs to the carbohydrate esterase 15 (CE15) family.

The protein resides in the secreted. It carries out the reaction a 4-O-methyl-alpha-D-glucuronosyl ester derivative + H2O = 4-O-methyl-alpha-D-glucuronate derivative + an alcohol + H(+). Glucuronoyl esterase which may play a significant role in biomass degradation, as it is considered to disconnect hemicellulose from lignin through the hydrolysis of the ester bond between 4-O-methyl-D-glucuronic acid residues of glucuronoxylans and aromatic alcohols of lignin. Cleaves native lignin-carbohydrate (LC) ester bonds from LC complex preparations of spruce (softwood) and birch (hardwood), containing mainly hemicelluloses with partially acetylated glucomannans in spruce and partially acetylated xylan in birch. Can hydrolyze benzyl glucuronic acid (BnGlcA), allyl glucuronic acid (allylGlcA) and to a lower degree methyl glucuronic acid (MeGlcA) in vitro. This chain is 4-O-methyl-glucuronoyl methylesterase 1, found in Sodiomyces alcalophilus (Acremonium alcalophilum).